The primary structure comprises 487 residues: Protein nucleotidyltransferase YdiU (487 aa).

ATP is bound by residues Gly-86, Gly-88, Arg-89, Lys-109, Asp-121, Gly-122, Arg-172, and Arg-179. Asp-248 serves as the catalytic Proton acceptor. Mg(2+)-binding residues include Asn-249 and Asp-258. Asp-258 is a binding site for ATP.

This sequence belongs to the SELO family. It depends on Mg(2+) as a cofactor. Requires Mn(2+) as cofactor.

It catalyses the reaction L-seryl-[protein] + ATP = 3-O-(5'-adenylyl)-L-seryl-[protein] + diphosphate. The catalysed reaction is L-threonyl-[protein] + ATP = 3-O-(5'-adenylyl)-L-threonyl-[protein] + diphosphate. The enzyme catalyses L-tyrosyl-[protein] + ATP = O-(5'-adenylyl)-L-tyrosyl-[protein] + diphosphate. It carries out the reaction L-histidyl-[protein] + UTP = N(tele)-(5'-uridylyl)-L-histidyl-[protein] + diphosphate. It catalyses the reaction L-seryl-[protein] + UTP = O-(5'-uridylyl)-L-seryl-[protein] + diphosphate. The catalysed reaction is L-tyrosyl-[protein] + UTP = O-(5'-uridylyl)-L-tyrosyl-[protein] + diphosphate. Its function is as follows. Nucleotidyltransferase involved in the post-translational modification of proteins. It can catalyze the addition of adenosine monophosphate (AMP) or uridine monophosphate (UMP) to a protein, resulting in modifications known as AMPylation and UMPylation. This is Protein nucleotidyltransferase YdiU from Sphingopyxis alaskensis (strain DSM 13593 / LMG 18877 / RB2256) (Sphingomonas alaskensis).